A 901-amino-acid chain; its full sequence is HTH-type transcriptional regulator MalT (901 aa).

39–46 serves as a coordination point for ATP; it reads SPAGYGKT. An HTH luxR-type domain is found at 829 to 894; that stretch reads ELIRTSPLTQ…AAVQHAQKLL (66 aa). Positions 853–872 form a DNA-binding region, H-T-H motif; the sequence is NEQIAGELEVAATTIKTHIR.

This sequence belongs to the MalT family. As to quaternary structure, monomer in solution. Oligomerizes to an active state in the presence of the positive effectors ATP and maltotriose.

Activated by ATP and maltotriose, which are both required for DNA binding. Functionally, positively regulates the transcription of the maltose regulon whose gene products are responsible for uptake and catabolism of malto-oligosaccharides. Specifically binds to the promoter region of its target genes, recognizing a short DNA motif called the MalT box. The protein is HTH-type transcriptional regulator MalT of Escherichia coli O6:H1 (strain CFT073 / ATCC 700928 / UPEC).